Here is a 626-residue protein sequence, read N- to C-terminus: Chaperone protein HtpG (626 aa).

The tract at residues 1 to 341 (METKQFKAES…SEDLSLNISR (341 aa)) is a; substrate-binding. The interval 342–552 (EMLQHDRQLK…EGEISIEMEK (211 aa)) is b. The tract at residues 553-626 (ILSAMPNNEN…FSNSICKLMI (74 aa)) is c.

The protein belongs to the heat shock protein 90 family. Homodimer.

It localises to the cytoplasm. In terms of biological role, molecular chaperone. Has ATPase activity. The chain is Chaperone protein HtpG from Alkaliphilus oremlandii (strain OhILAs) (Clostridium oremlandii (strain OhILAs)).